We begin with the raw amino-acid sequence, 404 residues long: Formate-dependent phosphoribosylglycinamide formyltransferase (404 aa).

Residues 25–26 (EL) and E85 contribute to the N(1)-(5-phospho-beta-D-ribosyl)glycinamide site. ATP-binding positions include R118, K159, 164 to 169 (SSGKGQ), 199 to 202 (EGFI), and E207. The ATP-grasp domain occupies 123 to 318 (RLAAEELGLP…EFELHARAIL (196 aa)). The Mg(2+) site is built by E277 and E289. N(1)-(5-phospho-beta-D-ribosyl)glycinamide is bound by residues D296, K365, and 372-373 (RR).

Belongs to the PurK/PurT family. Homodimer.

It carries out the reaction N(1)-(5-phospho-beta-D-ribosyl)glycinamide + formate + ATP = N(2)-formyl-N(1)-(5-phospho-beta-D-ribosyl)glycinamide + ADP + phosphate + H(+). It participates in purine metabolism; IMP biosynthesis via de novo pathway; N(2)-formyl-N(1)-(5-phospho-D-ribosyl)glycinamide from N(1)-(5-phospho-D-ribosyl)glycinamide (formate route): step 1/1. Involved in the de novo purine biosynthesis. Catalyzes the transfer of formate to 5-phospho-ribosyl-glycinamide (GAR), producing 5-phospho-ribosyl-N-formylglycinamide (FGAR). Formate is provided by PurU via hydrolysis of 10-formyl-tetrahydrofolate. This is Formate-dependent phosphoribosylglycinamide formyltransferase from Burkholderia mallei (strain NCTC 10247).